Here is a 558-residue protein sequence, read N- to C-terminus: Formate--tetrahydrofolate ligase (558 aa).

67 to 74 (TPAGEGKT) contributes to the ATP binding site.

It belongs to the formate--tetrahydrofolate ligase family.

It carries out the reaction (6S)-5,6,7,8-tetrahydrofolate + formate + ATP = (6R)-10-formyltetrahydrofolate + ADP + phosphate. It participates in one-carbon metabolism; tetrahydrofolate interconversion. In Ruegeria sp. (strain TM1040) (Silicibacter sp.), this protein is Formate--tetrahydrofolate ligase.